The following is a 230-amino-acid chain: Potassium/proton antiporter CemA (230 aa).

The next 4 helical transmembrane spans lie at 7 to 27 (LPSL…SSSF), 106 to 126 (IILH…SFFL), 145 to 165 (LNDS…VGFH), and 181 to 201 (FGWA…PVIL).

It belongs to the CemA family.

It is found in the plastid. The protein resides in the chloroplast inner membrane. It carries out the reaction K(+)(in) + H(+)(out) = K(+)(out) + H(+)(in). Its function is as follows. Contributes to K(+)/H(+) antiport activity by supporting proton efflux to control proton extrusion and homeostasis in chloroplasts in a light-dependent manner to modulate photosynthesis. Prevents excessive induction of non-photochemical quenching (NPQ) under continuous-light conditions. Indirectly promotes efficient inorganic carbon uptake into chloroplasts. In Hordeum vulgare (Barley), this protein is Potassium/proton antiporter CemA.